A 90-amino-acid polypeptide reads, in one-letter code: Acylphosphatase (90 aa).

One can recognise an Acylphosphatase-like domain in the interval 3–90; it reads AVHMNASGQV…FEGQDFIVKY (88 aa). Residues arginine 18 and asparagine 36 contribute to the active site.

Belongs to the acylphosphatase family.

The catalysed reaction is an acyl phosphate + H2O = a carboxylate + phosphate + H(+). The protein is Acylphosphatase (acyP) of Pediococcus pentosaceus (strain ATCC 25745 / CCUG 21536 / LMG 10740 / 183-1w).